The primary structure comprises 167 residues: Large ribosomal subunit protein uL10 (167 aa).

Belongs to the universal ribosomal protein uL10 family. Part of the ribosomal stalk of the 50S ribosomal subunit. The N-terminus interacts with L11 and the large rRNA to form the base of the stalk. The C-terminus forms an elongated spine to which L12 dimers bind in a sequential fashion forming a multimeric L10(L12)X complex.

Its function is as follows. Forms part of the ribosomal stalk, playing a central role in the interaction of the ribosome with GTP-bound translation factors. This Lactiplantibacillus plantarum (strain ATCC BAA-793 / NCIMB 8826 / WCFS1) (Lactobacillus plantarum) protein is Large ribosomal subunit protein uL10.